The primary structure comprises 47 residues: Large ribosomal subunit protein bL34 (47 aa).

The protein belongs to the bacterial ribosomal protein bL34 family.

The polypeptide is Large ribosomal subunit protein bL34 (rpmH) (Mycobacterium leprae (strain TN)).